We begin with the raw amino-acid sequence, 663 residues long: Methionine--tRNA ligase (663 aa).

The 'HIGH' region motif lies at 10–20; the sequence is AYTNGPLHLGH. Zn(2+)-binding residues include Cys-142, Cys-145, Cys-154, and Cys-157. Residues 323-327 carry the 'KMSKS' region motif; it reads KMSTS. Thr-326 contributes to the ATP binding site. One can recognise a tRNA-binding domain in the interval 563-663; the sequence is YFGNIDLRVG…RDLPVGSKIH (101 aa).

Belongs to the class-I aminoacyl-tRNA synthetase family. MetG type 1 subfamily. As to quaternary structure, homodimer. Zn(2+) serves as cofactor.

It is found in the cytoplasm. The enzyme catalyses tRNA(Met) + L-methionine + ATP = L-methionyl-tRNA(Met) + AMP + diphosphate. Functionally, is required not only for elongation of protein synthesis but also for the initiation of all mRNA translation through initiator tRNA(fMet) aminoacylation. The protein is Methionine--tRNA ligase of Methanococcus maripaludis (strain C5 / ATCC BAA-1333).